A 1198-amino-acid chain; its full sequence is Fibronectin type-III domain-containing protein 3A (1198 aa).

Residues 188–201 show a composition bias toward basic and acidic residues; that stretch reads KKLKDRQGTQKDKM. The disordered stretch occupies residues 188–257; it reads KKLKDRQGTQ…VDPEMEEKDE (70 aa). 3 positions are modified to phosphoserine: Ser-203, Ser-207, and Ser-213. Fibronectin type-III domains follow at residues 268 to 369, 373 to 465, 469 to 562, 566 to 660, 664 to 757, 761 to 851, 863 to 950, 951 to 1045, and 1049 to 1151; these read NIVK…TLSC, PPNA…TSGC, VPAS…TCPD, VPVK…TPAV, PCLP…TAPG, QCRP…TPPS, SDDD…TKPL, PPDP…TPKS, and ALKA…TEPP. Lys-384 carries the post-translational modification N6-acetyllysine. The chain crosses the membrane as a helical span at residues 1177-1197; sequence ILVVFAFFSILIAFIIQYFVI.

Belongs to the FNDC3 family. Testis. Localizes to the acrosome of spermatids, as well as to Leydig cells. Can be detected on the acrosome beginning at steps 2-3 and continuing until step 12 of spermiogenesis.

It localises to the golgi apparatus membrane. In terms of biological role, mediates spermatid-Sertoli adhesion during spermatogenesis. This is Fibronectin type-III domain-containing protein 3A (Fndc3a) from Mus musculus (Mouse).